Here is a 285-residue protein sequence, read N- to C-terminus: Urease accessory protein UreD (285 aa).

It belongs to the UreD family. As to quaternary structure, ureD, UreF and UreG form a complex that acts as a GTP-hydrolysis-dependent molecular chaperone, activating the urease apoprotein by helping to assemble the nickel containing metallocenter of UreC. The UreE protein probably delivers the nickel.

It is found in the cytoplasm. Required for maturation of urease via the functional incorporation of the urease nickel metallocenter. The protein is Urease accessory protein UreD of Picosynechococcus sp. (strain ATCC 27264 / PCC 7002 / PR-6) (Agmenellum quadruplicatum).